The chain runs to 281 residues: NADPH-dependent 7-cyano-7-deazaguanine reductase (281 aa).

Position 88–90 (88–90 (IES)) interacts with substrate. 90-91 (SK) is an NADPH binding site. The Thioimide intermediate role is filled by C189. The active-site Proton donor is D196. Residue 228–229 (HE) participates in substrate binding. 257 to 258 (RG) contacts NADPH.

The protein belongs to the GTP cyclohydrolase I family. QueF type 2 subfamily. In terms of assembly, homodimer.

It is found in the cytoplasm. It catalyses the reaction 7-aminomethyl-7-carbaguanine + 2 NADP(+) = 7-cyano-7-deazaguanine + 2 NADPH + 3 H(+). It functions in the pathway tRNA modification; tRNA-queuosine biosynthesis. Catalyzes the NADPH-dependent reduction of 7-cyano-7-deazaguanine (preQ0) to 7-aminomethyl-7-deazaguanine (preQ1). The polypeptide is NADPH-dependent 7-cyano-7-deazaguanine reductase (Yersinia pseudotuberculosis serotype O:1b (strain IP 31758)).